The following is a 293-amino-acid chain: Phospholipid scramblase 2 (293 aa).

The tract at residues 1 to 39 is disordered; sequence MDKQNVQMNPPHPGTNLTGPPGHIGYPGPQAGYAVPPPG. The proline-rich domain (PRD) stretch occupies residues 1-66; the sequence is MDKQNVQMNP…GHPGAPTQVP (66 aa). Residues 1-270 are Cytoplasmic-facing; it reads MDKQNVQMNP…IQFPLDLDVK (270 aa). Residue Thr143 is modified to Phosphothreonine; by PKC. Residues Cys166, Cys167, Cys170, and Cys171 are each lipidated (S-palmitoyl cysteine). Residues 271–287 traverse the membrane as a helical segment; that stretch reads MKAVMLGACFLIDFMFF. The Extracellular segment spans residues 288–293; the sequence is EMTRGE.

The protein belongs to the phospholipid scramblase family. The cofactor is Ca(2+).

Its subcellular location is the membrane. It carries out the reaction a 1,2-diacyl-sn-glycero-3-phosphocholine(in) = a 1,2-diacyl-sn-glycero-3-phosphocholine(out). Functionally, may catalyze calcium-induced ATP-independent rapid bidirectional and non-specific movement of phospholipids (lipid scrambling or lipid flip-flop) between the inner and outer leaflet of the plasma membrane. The sequence is that of Phospholipid scramblase 2 from Bos taurus (Bovine).